Consider the following 389-residue polypeptide: Probable protein phosphatase 2C 12 (389 aa).

Positions 42-356 (VASLFSQRGK…DDCSAVCLFL (315 aa)) constitute a PPM-type phosphatase domain. Positions 77 and 78 each coordinate Mn(2+). Residues 119-145 (AFSDDAAASSSADSSGNSSPQPSASAS) are disordered. Positions 121–145 (SDDAAASSSADSSGNSSPQPSASAS) are enriched in low complexity. Residues D301 and D347 each contribute to the Mn(2+) site.

This sequence belongs to the PP2C family. Requires Mg(2+) as cofactor. Mn(2+) is required as a cofactor.

It catalyses the reaction O-phospho-L-seryl-[protein] + H2O = L-seryl-[protein] + phosphate. The enzyme catalyses O-phospho-L-threonyl-[protein] + H2O = L-threonyl-[protein] + phosphate. The protein is Probable protein phosphatase 2C 12 of Oryza sativa subsp. japonica (Rice).